The following is a 124-amino-acid chain: Large ribosomal subunit protein bL12 (124 aa).

The protein belongs to the bacterial ribosomal protein bL12 family. As to quaternary structure, homodimer. Part of the ribosomal stalk of the 50S ribosomal subunit. Forms a multimeric L10(L12)X complex, where L10 forms an elongated spine to which 2 to 4 L12 dimers bind in a sequential fashion. Binds GTP-bound translation factors.

Forms part of the ribosomal stalk which helps the ribosome interact with GTP-bound translation factors. Is thus essential for accurate translation. In Brucella anthropi (strain ATCC 49188 / DSM 6882 / CCUG 24695 / JCM 21032 / LMG 3331 / NBRC 15819 / NCTC 12168 / Alc 37) (Ochrobactrum anthropi), this protein is Large ribosomal subunit protein bL12.